Consider the following 238-residue polypeptide: Sugar fermentation stimulation protein homolog (238 aa).

The protein belongs to the SfsA family.

The polypeptide is Sugar fermentation stimulation protein homolog (Brucella melitensis biotype 1 (strain ATCC 23456 / CCUG 17765 / NCTC 10094 / 16M)).